Consider the following 493-residue polypeptide: Sulfoacetaldehyde dehydrogenase (acylating) (493 aa).

The segment covering 1–10 (MSVQILHRRQ) has biased composition (basic residues). Positions 1-21 (MSVQILHRRQSNNSDLPLPTA) are disordered. C273 (nucleophile) is an active-site residue.

It belongs to the aldehyde dehydrogenase family. In terms of assembly, homodimer.

Its subcellular location is the cytoplasm. It catalyses the reaction sulfoacetaldehyde + NADP(+) + CoA = sulfoacetyl-CoA + NADPH + H(+). Involved in the degradation of sulfoacetate, a widespread natural product. Catalyzes the conversion of sulfoacetyl-CoA and NADPH to sulfoacetaldehyde, CoA and NADP(+). Specific for NADP(+) and sulfoacetaldehyde. This Cupriavidus necator (strain ATCC 17699 / DSM 428 / KCTC 22496 / NCIMB 10442 / H16 / Stanier 337) (Ralstonia eutropha) protein is Sulfoacetaldehyde dehydrogenase (acylating).